Reading from the N-terminus, the 92-residue chain is Large ribosomal subunit protein bL25 (92 aa).

The protein belongs to the bacterial ribosomal protein bL25 family. In terms of assembly, part of the 50S ribosomal subunit; part of the 5S rRNA/L5/L18/L25 subcomplex. Contacts the 5S rRNA. Binds to the 5S rRNA independently of L5 and L18.

Its function is as follows. This is one of the proteins that binds to the 5S RNA in the ribosome where it forms part of the central protuberance. In Vibrio parahaemolyticus serotype O3:K6 (strain RIMD 2210633), this protein is Large ribosomal subunit protein bL25.